Consider the following 131-residue polypeptide: Phosphoribosyl-ATP pyrophosphatase 2 (131 aa).

Residues 105–131 (RIGKPAAPHATRRPVIPQEARAVRKHR) are disordered.

This sequence belongs to the PRA-PH family.

The protein localises to the cytoplasm. The enzyme catalyses 1-(5-phospho-beta-D-ribosyl)-ATP + H2O = 1-(5-phospho-beta-D-ribosyl)-5'-AMP + diphosphate + H(+). Its pathway is amino-acid biosynthesis; L-histidine biosynthesis; L-histidine from 5-phospho-alpha-D-ribose 1-diphosphate: step 2/9. This Rhodopseudomonas palustris (strain ATCC BAA-98 / CGA009) protein is Phosphoribosyl-ATP pyrophosphatase 2 (hisE2).